Reading from the N-terminus, the 237-residue chain is Phosphoribosylaminoimidazole-succinocarboxamide synthase (237 aa).

This sequence belongs to the SAICAR synthetase family.

It carries out the reaction 5-amino-1-(5-phospho-D-ribosyl)imidazole-4-carboxylate + L-aspartate + ATP = (2S)-2-[5-amino-1-(5-phospho-beta-D-ribosyl)imidazole-4-carboxamido]succinate + ADP + phosphate + 2 H(+). The protein operates within purine metabolism; IMP biosynthesis via de novo pathway; 5-amino-1-(5-phospho-D-ribosyl)imidazole-4-carboxamide from 5-amino-1-(5-phospho-D-ribosyl)imidazole-4-carboxylate: step 1/2. In Yersinia pseudotuberculosis serotype O:1b (strain IP 31758), this protein is Phosphoribosylaminoimidazole-succinocarboxamide synthase.